Consider the following 317-residue polypeptide: Cytochrome c biogenesis protein CcsA (317 aa).

7 helical membrane-spanning segments follow: residues 13–35 (ISFSIIAIVITTHLMTLLVHEIV), 44–64 (GMIATFFCITGLLVTRWIYSG), 71–91 (LYESLMFLSWSFSLILMVPYF), 143–163 (MLLSYAALLCGSLLSIALLVI), 171–191 (MIGFTNHLLIWPFSFGEIKYL), 225–245 (VIGLGFTFSTIGILSGAVWAN), and 286–306 (AIVASMGFLIIWICYFGVNLL).

The protein belongs to the CcmF/CycK/Ccl1/NrfE/CcsA family. In terms of assembly, may interact with Ccs1.

It localises to the plastid. It is found in the chloroplast thylakoid membrane. Its function is as follows. Required during biogenesis of c-type cytochromes (cytochrome c6 and cytochrome f) at the step of heme attachment. The protein is Cytochrome c biogenesis protein CcsA of Illicium oligandrum (Star anise).